A 486-amino-acid polypeptide reads, in one-letter code: 2-succinylbenzoate--CoA ligase (486 aa).

This sequence belongs to the ATP-dependent AMP-binding enzyme family. MenE subfamily.

The catalysed reaction is 2-succinylbenzoate + ATP + CoA = 2-succinylbenzoyl-CoA + AMP + diphosphate. It participates in quinol/quinone metabolism; 1,4-dihydroxy-2-naphthoate biosynthesis; 1,4-dihydroxy-2-naphthoate from chorismate: step 5/7. It functions in the pathway quinol/quinone metabolism; menaquinone biosynthesis. In terms of biological role, converts 2-succinylbenzoate (OSB) to 2-succinylbenzoyl-CoA (OSB-CoA). In Bacillus pumilus (strain SAFR-032), this protein is 2-succinylbenzoate--CoA ligase.